The primary structure comprises 567 residues: Proline--tRNA ligase (567 aa).

This sequence belongs to the class-II aminoacyl-tRNA synthetase family. ProS type 1 subfamily. Homodimer.

The protein resides in the cytoplasm. It carries out the reaction tRNA(Pro) + L-proline + ATP = L-prolyl-tRNA(Pro) + AMP + diphosphate. Functionally, catalyzes the attachment of proline to tRNA(Pro) in a two-step reaction: proline is first activated by ATP to form Pro-AMP and then transferred to the acceptor end of tRNA(Pro). As ProRS can inadvertently accommodate and process non-cognate amino acids such as alanine and cysteine, to avoid such errors it has two additional distinct editing activities against alanine. One activity is designated as 'pretransfer' editing and involves the tRNA(Pro)-independent hydrolysis of activated Ala-AMP. The other activity is designated 'posttransfer' editing and involves deacylation of mischarged Ala-tRNA(Pro). The misacylated Cys-tRNA(Pro) is not edited by ProRS. This chain is Proline--tRNA ligase, found in Campylobacter curvus (strain 525.92).